Reading from the N-terminus, the 534-residue chain is Probable DNA ligase (534 aa).

Glutamate 213 contributes to the ATP binding site. Catalysis depends on lysine 215, which acts as the N6-AMP-lysine intermediate. Positions 220, 235, 264, 303, 375, and 381 each coordinate ATP.

It belongs to the ATP-dependent DNA ligase family. Requires Mg(2+) as cofactor.

The enzyme catalyses ATP + (deoxyribonucleotide)n-3'-hydroxyl + 5'-phospho-(deoxyribonucleotide)m = (deoxyribonucleotide)n+m + AMP + diphosphate.. In terms of biological role, DNA ligase that seals nicks in double-stranded DNA during DNA replication, DNA recombination and DNA repair. This chain is Probable DNA ligase, found in Mycolicibacterium vanbaalenii (strain DSM 7251 / JCM 13017 / BCRC 16820 / KCTC 9966 / NRRL B-24157 / PYR-1) (Mycobacterium vanbaalenii).